A 342-amino-acid chain; its full sequence is D-erythrose-4-phosphate dehydrogenase (342 aa).

Position 12-13 (12-13) interacts with NAD(+); the sequence is RI. Residues 154-156, Arg-200, 213-214, and Arg-236 each bind substrate; these read SCT and TK. Catalysis depends on Cys-155, which acts as the Nucleophile. Asn-318 serves as a coordination point for NAD(+).

It belongs to the glyceraldehyde-3-phosphate dehydrogenase family. Epd subfamily. Homotetramer.

The protein localises to the cytoplasm. It catalyses the reaction D-erythrose 4-phosphate + NAD(+) + H2O = 4-phospho-D-erythronate + NADH + 2 H(+). It functions in the pathway cofactor biosynthesis; pyridoxine 5'-phosphate biosynthesis; pyridoxine 5'-phosphate from D-erythrose 4-phosphate: step 1/5. Functionally, catalyzes the NAD-dependent conversion of D-erythrose 4-phosphate to 4-phosphoerythronate. In Klebsiella pneumoniae subsp. pneumoniae (strain ATCC 700721 / MGH 78578), this protein is D-erythrose-4-phosphate dehydrogenase.